Consider the following 447-residue polypeptide: Tektin-4 (447 aa).

Coiled-coil stretches lie at residues 322 to 348 and 375 to 423; these read LRKTLTEITDQEHQIAALKQAIKDKEA and FRLL…TNSL.

The protein belongs to the tektin family. As to quaternary structure, microtubule inner protein component of sperm flagellar doublet microtubules. In terms of processing, ubiquitinated, leading to its degradation. Deubiquitinated by USP16, promoting its stability. Detected in testis, where it is weakly expressed in round spermatids, and strongly expressed in the flagellum of step 16 elongated spermatids (at protein level). Expressed in spermatozoa. In the sperm flagellum, localizes to the principal piece and midpiece (at protein level). Specifically expressed in testis; not detected in other tissues tested.

It localises to the cytoplasm. Its subcellular location is the cytoskeleton. The protein resides in the cilium axoneme. It is found in the flagellum axoneme. Functionally, microtubule inner protein (MIP) part of the dynein-decorated doublet microtubules (DMTs) in cilia and flagellar axoneme. Forms filamentous polymers in the walls of ciliary and flagellar microtubules. Contributes to normal sperm motility. The protein is Tektin-4 (Tekt4) of Mus musculus (Mouse).